The chain runs to 179 residues: Serglycin (179 aa).

An N-terminal signal peptide occupies residues 1 to 26 (MRQVPVGTRLVLALAFVLVWGSSVQG). A propeptide spans 27-75 (YPARRARYQWVRCKPDGIFANCIEEKGPRFDLIAEESNVGPPMTDPVLM) (activation peptide). A disulfide bridge links Cys39 with Cys48. Positions 86–145 (SDDYSGSGSGSGSGSGSGSGSGSGSGSGSGSGSGSGSGSGSGSGSGSGSGSGSLADMEWE) are disordered. Ser90 and Ser92 each carry an O-linked (Xyl...) (glycosaminoglycan) serine glycan. 24 repeat units span residues 90 to 91 (SG), 92 to 93 (SG), 94 to 95 (SG), 96 to 97 (SG), 98 to 99 (SG), 100 to 101 (SG), 102 to 103 (SG), 104 to 105 (SG), 106 to 107 (SG), 108 to 109 (SG), 110 to 111 (SG), 112 to 113 (SG), 114 to 115 (SG), 116 to 117 (SG), 118 to 119 (SG), 120 to 121 (SG), 122 to 123 (SG), 124 to 125 (SG), 126 to 127 (SG), 128 to 129 (SG), 130 to 131 (SG), 132 to 133 (SG), 134 to 135 (SG), and 136 to 137 (SG). The 24 X 2 AA tandem repeats of S-G stretch occupies residues 90 to 137 (SGSGSGSGSGSGSGSGSGSGSGSGSGSGSGSGSGSGSGSGSGSGSGSG). Gly residues predominate over residues 92–136 (SGSGSGSGSGSGSGSGSGSGSGSGSGSGSGSGSGSGSGSGSGSGS). 6 O-linked (Xyl...) (glycosaminoglycan) serine glycosylation sites follow: Ser96, Ser98, Ser100, Ser102, Ser104, and Ser106.

Belongs to the serglycin family. In terms of assembly, binds to activated CD44 and to GZMB. In terms of processing, O-glycosylated; contains chondroitin sulfate and heparan sulfate.

It is found in the cytoplasmic granule. It localises to the cytolytic granule. The protein localises to the secreted. Its subcellular location is the extracellular space. The protein resides in the golgi apparatus. Plays a role in formation of mast cell secretory granules and mediates storage of various compounds in secretory vesicles. Required for storage of some proteases in both connective tissue and mucosal mast cells and for storage of granzyme B in T-lymphocytes. Plays a role in localizing neutrophil elastase in azurophil granules of neutrophils. Mediates processing of MMP2. Plays a role in cytotoxic cell granule-mediated apoptosis by forming a complex with granzyme B which is delivered to cells by perforin to induce apoptosis. Regulates the secretion of TNF-alpha and may also regulate protease secretion. Inhibits bone mineralization. The protein is Serglycin (Srgn) of Rattus norvegicus (Rat).